The following is a 424-amino-acid chain: MKILYIVLDGAADSPTSPRKTLEEASKPNIDSLGSHAVCGMVYTVKPGVAPQSDYATLSLLGYNPDEYYPGRGPLEAFGAGIEMRRGDIALRANFATVDPGTLRIIDRRVGRSLTSREARELASAVDGMELEDGEGTALFRATIGHRGVLVLRHRSKPLSDAISNTDPAYERRGRFSVALEKYEPFIKLSNPLVEDEAAVLAARMLNEFTLKAVEILDSHPVNLAREKRGLLKANAILSRDAGGLPEEKPPSFQERFGLRGASIVEMVVERGISRYIGLDDIRVEIEGRAREEVYREEAARAVEALETHDLVYVHLKGPDEPGHDGSFEGKIRAVEDIDKHFFAPLLDRLSSAGLEPAFVVTSDHATPWDVGAHSGDPVPLMISHQSIQGSIGKFSETVCLRGRLGTIIGGYRIIPKTLSLLAG.

This sequence belongs to the BPG-independent phosphoglycerate mutase family. A-PGAM subfamily.

It catalyses the reaction (2R)-2-phosphoglycerate = (2R)-3-phosphoglycerate. Its pathway is carbohydrate degradation; glycolysis; pyruvate from D-glyceraldehyde 3-phosphate: step 3/5. Its function is as follows. Catalyzes the interconversion of 2-phosphoglycerate and 3-phosphoglycerate. The chain is 2,3-bisphosphoglycerate-independent phosphoglycerate mutase from Aeropyrum pernix (strain ATCC 700893 / DSM 11879 / JCM 9820 / NBRC 100138 / K1).